Reading from the N-terminus, the 40-residue chain is Beta/delta-ctenitoxin-Pr1a (40 aa).

4 disulfides stabilise this stretch: Cys1/Cys15, Cys8/Cys21, Cys14/Cys31, and Cys23/Cys29.

The protein belongs to the neurotoxin 03 (Tx2) family. 05 subfamily. In terms of tissue distribution, expressed by the venom gland.

It localises to the secreted. In terms of biological role, potent insecticidal toxin that binds to two distinct sites in insect sodium channels, with close affinity (Kd1=34.7 pM and Kd2=35.1 pM). Its association is rather fast (1.4 and 8.5 minutes, respectively for sites 1 and 2) and its dissociation is a slower process (5.4 and 32.8 minutes, respectively). On rat brain synaptosomes the toxin partially competes (~30%) with the beta-toxin CssIV, but does not compete with the alpha-toxin AaII, nor with the beta-toxin Ts VII. On cockroach nerve cord synaptosomes, the toxin does not compete with the anti-insect toxin LqqIT1, but it competes with the 'alpha-like' toxin BomIV (IC(50)=80 pM). In cockroach neurons, the toxin inhibits the inactivation of sodium channels and it shifts the sodium channel activation to hyperpolarizing potentials. Hence, it behaves like an 'alpha-like' toxin and binds preferentially to site 3 on the insect Nav channel, located on the domain IV. The toxin may also inhibit the N-methyl-D-aspartate (NMDA)-subtype of ionotropic glutamate receptor (GRIN). In vivo, the toxin causes excitatory effects on insects. This chain is Beta/delta-ctenitoxin-Pr1a, found in Phoneutria reidyi (Brazilian Amazonian armed spider).